The primary structure comprises 275 residues: Uroporphyrinogen-III synthase (275 aa).

This sequence belongs to the uroporphyrinogen-III synthase family.

It carries out the reaction hydroxymethylbilane = uroporphyrinogen III + H2O. The protein operates within porphyrin-containing compound metabolism; protoporphyrin-IX biosynthesis; coproporphyrinogen-III from 5-aminolevulinate: step 3/4. In terms of biological role, catalyzes cyclization of the linear tetrapyrrole, hydroxymethylbilane, to the macrocyclic uroporphyrinogen III, the fourth step in the heme biosynthetic pathway. This Saccharomyces cerevisiae (strain ATCC 204508 / S288c) (Baker's yeast) protein is Uroporphyrinogen-III synthase.